The chain runs to 596 residues: Alkaline phosphatase 4 (596 aa).

A signal peptide spans 1-20; it reads MHCLVILGFLLGSLVAFSWA. Mg(2+) is bound at residue D93. Residue D93 participates in Zn(2+) binding. S144 (phosphoserine intermediate) is an active-site residue. Positions 202 and 204 each coordinate Mg(2+). 2 N-linked (GlcNAc...) asparagine glycosylation sites follow: N262 and N297. E369 is a binding site for Mg(2+). Residues D374 and H378 each contribute to the Zn(2+) site. An N-linked (GlcNAc...) asparagine glycan is attached at N401. Zn(2+) contacts are provided by D415 and H416. N-linked (GlcNAc...) asparagine glycosylation is found at N464 and N470. H504 provides a ligand contact to Zn(2+). Cysteines 539 and 550 form a disulfide. Over residues 548-566 the composition is skewed to basic and acidic residues; that stretch reads DSCEDHKDGQKDRPLDKPN. Residues 548 to 570 are disordered; that stretch reads DSCEDHKDGQKDRPLDKPNPKRN. N570 is lipidated: GPI-anchor amidated asparagine. The helical transmembrane segment at 571–591 threads the bilayer; that stretch reads GATVVGASLIPILTAATAAIL. The propeptide at 571 to 596 is removed in mature form; the sequence is GATVVGASLIPILTAATAAILRGRGL.

Belongs to the alkaline phosphatase family. Homodimer. Mg(2+) serves as cofactor. Zn(2+) is required as a cofactor. In terms of tissue distribution, ellipsoid body ring neurons in the adult brain and in the lower Malpighian tubule and ureter.

Its subcellular location is the cell membrane. The enzyme catalyses a phosphate monoester + H2O = an alcohol + phosphate. Important role in neural and renal epithelial function. This Drosophila melanogaster (Fruit fly) protein is Alkaline phosphatase 4.